The following is a 196-amino-acid chain: uncharacterized protein (196 aa).

Residues 11–31 form a helical membrane-spanning segment; that stretch reads ICGFLLVILTIGGVLGGVYLV.

Its subcellular location is the membrane. This is an uncharacterized protein from Mycoplasma genitalium (strain ATCC 33530 / DSM 19775 / NCTC 10195 / G37) (Mycoplasmoides genitalium).